The following is a 108-amino-acid chain: Sperm-egg fusion protein LLCFC1 (108 aa).

A signal peptide spans 1–30 (MTSLGSQLHRATFLTALLLLLLLQVKGVKT). Over residues 39 to 49 (GDKSQKDKVSS) the composition is skewed to basic and acidic residues. The disordered stretch occupies residues 39 to 64 (GDKSQKDKVSSEDQGEEEYEEHFEAS).

As to expression, detected in testicular germ cells and spermatozoa (at protein level). Abundantly expressed in testis.

It localises to the secreted. Functionally, sperm protein required for fusion of sperm with the egg membrane during fertilization. The polypeptide is Sperm-egg fusion protein LLCFC1 (Mus musculus (Mouse)).